We begin with the raw amino-acid sequence, 453 residues long: Sodium/alanine symporter AgcS (453 aa).

Over Met-1–Pro-17 the chain is Extracellular. A helical transmembrane segment spans residues Tyr-18–Leu-32. At Arg-33–Ala-67 the chain is on the cytoplasmic side. A helical transmembrane segment spans residues Leu-68–Val-89. Thr-75 serves as a coordination point for D-alanine. Residues Thr-75 and Gly-79 each coordinate L-alanine. Asn-80 contributes to the D-alanine binding site. Residues Leu-90–Gly-92 lie on the Extracellular side of the membrane. A helical membrane pass occupies residues Pro-93–Tyr-111. The Cytoplasmic portion of the chain corresponds to Ala-112–Lys-148. Residues Ile-149–Ala-179 form a helical membrane-spanning segment. Gln-170 serves as a coordination point for D-alanine. Gln-170 contacts L-alanine. Over Ser-180–Pro-186 the chain is Extracellular. Residues Leu-187–Leu-202 form a helical membrane-spanning segment. The Cytoplasmic segment spans residues Gly-203–Lys-206. The helical transmembrane segment at Ser-207–Met-233 threads the bilayer. Topologically, residues Asn-234–Ala-258 are extracellular. Residues Leu-259 to Ser-274 form a helical membrane-spanning segment. Phe-273–Ser-274 is a D-alanine binding site. Phe-273 to Glu-276 is a binding site for L-alanine. At Asn-275–Val-300 the chain is on the cytoplasmic side. A helical membrane pass occupies residues Ser-301–Ile-322. The Extracellular segment spans residues Ala-323–Met-350. A helical transmembrane segment spans residues Gly-351–Phe-378. Residues Glu-379 to Gly-386 lie on the Cytoplasmic side of the membrane. A helical transmembrane segment spans residues Ile-387–Thr-403. Topologically, residues Ala-404–Leu-408 are extracellular. The chain crosses the membrane as a helical span at residues Val-409–Leu-430. Over Leu-431–Ala-453 the chain is Cytoplasmic.

This sequence belongs to the alanine or glycine:cation symporter (AGCS) (TC 2.A.25) family.

Its subcellular location is the cell membrane. It catalyses the reaction D-alanine(in) + Na(+)(in) = D-alanine(out) + Na(+)(out). The catalysed reaction is L-alanine(in) + Na(+)(in) = L-alanine(out) + Na(+)(out). It carries out the reaction glycine(in) + Na(+)(in) = glycine(out) + Na(+)(out). In terms of biological role, catalyzes the sodium-dependent uptake of extracellular D-alanine and L-alanine. Can also transport glycine. Binds glycine and both enantiomers of alanine, while strictly excluding other amino acids. The sequence is that of Sodium/alanine symporter AgcS from Methanococcus maripaludis (strain DSM 14266 / JCM 13030 / NBRC 101832 / S2 / LL).